A 498-amino-acid chain; its full sequence is UDP-N-acetylmuramoylalanine--D-glutamate ligase (498 aa).

Residue 119–125 (GTNGKST) coordinates ATP.

The protein belongs to the MurCDEF family.

Its subcellular location is the cytoplasm. It catalyses the reaction UDP-N-acetyl-alpha-D-muramoyl-L-alanine + D-glutamate + ATP = UDP-N-acetyl-alpha-D-muramoyl-L-alanyl-D-glutamate + ADP + phosphate + H(+). It functions in the pathway cell wall biogenesis; peptidoglycan biosynthesis. Its function is as follows. Cell wall formation. Catalyzes the addition of glutamate to the nucleotide precursor UDP-N-acetylmuramoyl-L-alanine (UMA). The protein is UDP-N-acetylmuramoylalanine--D-glutamate ligase of Wolbachia sp. subsp. Brugia malayi (strain TRS).